The following is a 2167-amino-acid chain: MRLLLFSAALLLCSVPTWAFSLSSFFGSDVAQKPYLHPNSPPERDPASSRMKRQAYQVYVDGDVSVTVDKSGQKETGNWGPWVPENECSRSCGGGVQLEKRQCSGDCTGASVRYISCNLNACESGTDFRAEQCSKFNDEALDGNYHKWTPYKGKNKCELVCKPESGNFYYKWADKVVDGTKCDSKSNDICVDGECLPVGCDGKLGSSLKFDKCGKCDGDGSTCKTIEGRFDERNLSPGYHDIIKLPEGATNIKIQEARKSTNNLALKNGSDHFYLNGNGLIQVEKEVEVGGTIFVYDDAEPETLSAQGPLSEELTVALLFRKGSRDTAIKYEFSIPLEEEVDYMYKFDNWTPCSVSCGKGVQTRNLYCIDGKNKGRVEDDLCEENNATKPEFEKSCETVDCEAEWFTGDWESCSSTCGDQGQQYRVVYCHQVFANGRRVTVEDGNCTVERPPVKQTCNRFACPEWQAGPWSACSEKCGDAFQYRSVTCRSEKEGEEGKLLAADACPADEQEKFDTERTCNLGPCEGLTFVTGEWNLCTRCNDTEETREVTCKDSQGRAYPLEKCLVDNSTEIPTDTRSCATQPPCEYEWTVSEWSKCTTECGHGHKTRRVICAIHQNGGLEVVDEGHCQAEKPEGKTNCTNEEKCTGTWYTSSWSECTAECGGGSQDRVAVCLNYDKKPVPEWCDEAVKPSEKQDCNVDDCPTCVDSEFGCCPDNSTFATGEFNFGCSNCSETEFGCCADNVTVATGPNSKGCEEFVESPLNLEADVANADAEASGDAPELCSVTNENGEAVDVECATIAPITALLGDGELIGNDTDASNETIHCSKTEFGCCPDWYTAASGKGNEGCPSFTLGGCNETQFGCCHDDVTLARGANLEGCGEPSCAASLYGCCKDRKTIAFGPHYSGCERSSFPCELSDFGCCPDGETAALGKNGTGCGENCLTTKFGCCPDGKTTAKGSHNEGCGCEFAQYGCCPDGKSVAKGAGFYGCPESCAQSQFGCCPDGKTRARGENKEGCPCQYTRYGCCPDGETTALGPRNDGCDNCRYAKHGCCPDGETKALGPDGAGCPPTTTPPFLMGGTVAPHKIAACNQTQESGTVCGAGYKLAWHYDTTEGRCNQFWYGGCGGNDNNFASQDMCETICVEPPGKGRCYLPRVDGPLRCDQLQPRYYYDHSKKHCVAFWWRGCLGNANNFNSFEECSMFCKDVGPYDAPTTAAPPPPPQQNAQQYLPTPEVQQIEIQSAEQPQPQQPQQQQQQQQQQPQQPRQSMEDICRSRQDAGPCETYSDQWFYNAFSQECETFTYGGCGGNLNRFRSKDECEQRCFFVHGAQPSAARQEQAQPAAQPAQPAQPSNIVSPPQQSASPVVVPSNSKQRDACHLNVDQGRCKGAFDSWYYEVATGSCVTFKYTGCGGNANRFASKDQCESLCVKPASEAASAGIDGAAGINSVCDEAKDTGPCTNFVTKWYYNKADGTCNRFHYGGCQGTNNRFDNEQQCKAACQNHKDACQLPKVQGPCSGKHSYYYYNTASHQCETFTYGGCLGNTNRFATIEECQARCPKDDQTTTTSQPEELPSLPLVQEDPQPRPAFSLKQSFAHSRRRDAPFARSVSARHHTPDSEEERVDCYAVPDPGSCGDYRLVWHYSATSNSCRQFYYGGCAGNTNRFETRDKCETSCVAKIEERVESVSEASKSLEEVRLTDPRMDSHFGYHDPEVDQIEEEAEYVIVDTGALPELCMLPEQRGSCYDNILRWRFDSEKSQCVTFMYSGCNPNANHFTSQETCERACGKWRNVAVCELPAEHGDCQLAIPRWYHDPKTSQCQMMMWTGCGGNGNAFSSKADCESLCRVETLWSNNTDFCTLERSAGPCTDSISMWYFDSTHLDCKPFTYGGCRGNQNRFVSKEQCQQSCRPGDTKSEDICTLRPEPGPCRLGLEKYFYDPVIQSCHMFHYGGCEGNANRFDSELDCFRRCSSVKVEASESERVGQLTSASTPVIYIVNKTAIFVGNTFRIRCNSYGVLPITWYKNGGLLQFGSRITEENDDTLEIVDALTADAGVYTCIAGQDSTMSEGVEVVIKRLPGHRTTSRPMLTPSKNFSLGTPPTPSPSTVSTTPFRIYTPGSAPSDARVSRPTSNSCMDVGNASTCDLIVKNGLCGKKRYGTFCCHTCTRVHNFKF.

The first 19 residues, Met-1–Ala-19, serve as a signal peptide directing secretion. Residues Thr-76–Glu-123 enclose the TSP type-1 1 domain. 3 cysteine pairs are disulfide-bonded: Cys-88–Cys-117, Cys-92–Cys-122, and Cys-103–Cys-107. An N-linked (GlcNAc...) asparagine glycan is attached at Asn-268. TSP type-1 domains lie at Val-341–Glu-402, Glu-404–Arg-459, and Ala-461–Glu-525. Intrachain disulfides connect Cys-353/Cys-396, Cys-357/Cys-401, and Cys-368/Cys-382. 2 N-linked (GlcNAc...) asparagine glycosylation sites follow: Asn-386 and Asn-445. Asn-541, Asn-568, and Asn-638 each carry an N-linked (GlcNAc...) asparagine glycan. 2 TSP type-1 domains span residues Cys-585 to Glu-643 and Cys-645 to Pro-702. Asn-715, Asn-729, Asn-741, Asn-814, Asn-820, Asn-857, Asn-933, and Asn-1090 each carry an N-linked (GlcNAc...) asparagine glycan. Intrachain disulfides connect Cys-1089/Cys-1141, Cys-1099/Cys-1124, Cys-1116/Cys-1137, Cys-1150/Cys-1202, Cys-1161/Cys-1185, and Cys-1177/Cys-1198. BPTI/Kunitz inhibitor domains follow at residues Cys-1089–Cys-1141 and Cys-1150–Cys-1202. Residues Gln-1239–Ser-1273 form a disordered region. Residues Gln-1243–Pro-1263 show a composition bias toward low complexity. 3 disulfides stabilise this stretch: Cys-1271/Cys-1321, Cys-1280/Cys-1304, and Cys-1296/Cys-1317. The BPTI/Kunitz inhibitor 3 domain maps to Cys-1271–Cys-1321. Residues Ala-1332 to Val-1365 are disordered. 9 disulfides stabilise this stretch: Cys-1375-Cys-1425, Cys-1384-Cys-1408, Cys-1400-Cys-1421, Cys-1447-Cys-1497, Cys-1456-Cys-1480, Cys-1472-Cys-1493, Cys-1504-Cys-1554, Cys-1513-Cys-1537, and Cys-1529-Cys-1550. BPTI/Kunitz inhibitor domains follow at residues Cys-1375 to Cys-1425, Cys-1447 to Cys-1497, and Cys-1504 to Cys-1554. Residues Lys-1556–Glu-1615 form a disordered region. Disulfide bonds link Cys-1621-Cys-1671, Cys-1630-Cys-1654, Cys-1646-Cys-1667, Cys-1731-Cys-1781, Cys-1740-Cys-1764, Cys-1756-Cys-1777, Cys-1790-Cys-1840, Cys-1799-Cys-1823, and Cys-1815-Cys-1836. BPTI/Kunitz inhibitor domains are found at residues Cys-1621–Cys-1671, Cys-1731–Cys-1781, and Cys-1790–Cys-1840. Asn-1848 is a glycosylation site (N-linked (GlcNAc...) asparagine). Cystine bridges form between Cys-1853–Cys-1903, Cys-1862–Cys-1886, Cys-1878–Cys-1899, Cys-1914–Cys-1964, Cys-1923–Cys-1947, and Cys-1939–Cys-1960. 2 consecutive BPTI/Kunitz inhibitor domains span residues Cys-1853–Cys-1903 and Cys-1914–Cys-1964. N-linked (GlcNAc...) asparagine glycosylation is found at Asn-1992, Asn-2087, and Asn-2133. The disordered stretch occupies residues Arg-2075–Phe-2106. Positions Ser-2078–Leu-2090 are enriched in polar residues. One can recognise a PLAC domain in the interval Thr-2124–His-2163.

This sequence belongs to the papilin family. Localizes to the basement membranes of the gonad primordium, pharynx and intestine (at protein level). Expressed in head and CAN neurons, coelomocytes, body-wall muscles and anal depressor and sphincter and stomatointestinal muscles. Expressed Isoform a: is expressed in body wall muscles and distal cell tips. Isoform b: expressed in embryonic muscles.

Its subcellular location is the secreted. The protein resides in the extracellular space. The protein localises to the extracellular matrix. It localises to the basement membrane. Functionally, involved in pharynx morphogenesis probably by remodeling the basement membrane. Plays a role in embryogenesis, the second phase of distal cell tip migration and is required for distribution of the metalloproteinase, mig-17, during organogenesis. Its function is as follows. Plays a role in post embryonic distal cell tip migration. Essential extracellular matrix (ECM) protein required for hypodermal enclosure in the embryo. In Caenorhabditis elegans, this protein is Papilin (mig-6).